The following is a 629-amino-acid chain: MLLSELSHPNQLHGLTVSQLEEIACQIRERHLQVVSTSGGHLGPGLGVVELTLALYQTLDLDFDKVVWDVGHQGYPHKLITGRFSQFDSLRQQNGVAGYLKRSESKFDHFGAGHASTSISAALGMAIARDRKGDNYKCVAVIGDGALTGGMALEAINHAGHLPNTPLVVVLNDNDMSISPPVGALSSYLNKVRHSPPLQFLSDSVQESVKNIPLIGKDIPEELKNIKGSVRRLAVPKVGAVFEELGFTYMGPIDGHDIGNLINTFNAAHKLKKPVLVHVVTTKGKGYPYAEADQVGYHAQSSFDLTTGKSIPSKKPKPISYSKIFGQTLLKICEQDSKVVGITAAMATGTGLDILQKNIPDQYIDVGIAEQHAVTLAAGMSCDGLKPVVAIYSTFLQRAFDQLIHDVGIQNLPVSFVLDRAGIVGADGPTHQGQYDISYMRSIPNFVLMAPKDESELQRMLITSINHKGPTALRIPRGSGLGVAVMDEGWEPLNIGEAEILEEGNDILIIAYGSMVASALETAELLKAKNINSCIVNARFVKPLDKKLIMPLASRIQKVVTMEEGTLIGGFGSAIVELFNDNEINIPVYRIGIPDVLVDHASPDQSKEKLGLMPNQMADNIIKKFDLNN.

Residues His-72 and 113–115 (GHA) contribute to the thiamine diphosphate site. Asp-144 serves as a coordination point for Mg(2+). Residues 145-146 (GA), Asn-174, Tyr-287, and Glu-370 contribute to the thiamine diphosphate site. Asn-174 is a binding site for Mg(2+).

The protein belongs to the transketolase family. DXPS subfamily. As to quaternary structure, homodimer. Mg(2+) serves as cofactor. The cofactor is thiamine diphosphate.

The enzyme catalyses D-glyceraldehyde 3-phosphate + pyruvate + H(+) = 1-deoxy-D-xylulose 5-phosphate + CO2. It participates in metabolic intermediate biosynthesis; 1-deoxy-D-xylulose 5-phosphate biosynthesis; 1-deoxy-D-xylulose 5-phosphate from D-glyceraldehyde 3-phosphate and pyruvate: step 1/1. In terms of biological role, catalyzes the acyloin condensation reaction between C atoms 2 and 3 of pyruvate and glyceraldehyde 3-phosphate to yield 1-deoxy-D-xylulose-5-phosphate (DXP). This is 1-deoxy-D-xylulose-5-phosphate synthase from Prochlorococcus marinus (strain MIT 9215).